The following is a 288-amino-acid chain: Probable anion import ATP-binding protein HVO_1886 (288 aa).

Basic and acidic residues predominate over residues 1–18 (MTTERPDAGDSGSEKPDE). The tract at residues 1–33 (MTTERPDAGDSGSEKPDETAAPDPAANGARRSK) is disordered. Residues 36-282 (LAARSLGHGF…PDDDRVRQFV (247 aa)) enclose the ABC transporter domain. 68–75 (GPSGTGKT) provides a ligand contact to ATP.

Belongs to the ABC transporter superfamily. The complex is composed of two ATP-binding proteins (HVO_1886), two transmembrane proteins (HVO_1887) and a solute-binding protein (HVO_1888).

Its subcellular location is the cell membrane. Functionally, part of an ABC transporter complex involved in anions import. Responsible for energy coupling to the transport system. This chain is Probable anion import ATP-binding protein HVO_1886, found in Haloferax volcanii (strain ATCC 29605 / DSM 3757 / JCM 8879 / NBRC 14742 / NCIMB 2012 / VKM B-1768 / DS2) (Halobacterium volcanii).